We begin with the raw amino-acid sequence, 294 residues long: MGKDFKSGGGNAGGKPFNKGPGGPGGRPFNKGPGGPGGPGGKFGGGRPGGPGGKFGAKGPRGPKTIIVKHRLEGVFICKGQQEALVTKNFFPGESVYNEKRMSVEENGEKIEYRVWNPYRSKIAAAVVGGISDIHIKPGSKVLYLGGASGTTVSHVADIVGPTGVVYAVEFSHRSGRDLVNMAKKRTNVVPIIGDARKPQEYRFLVGMVDVVFADVAQPDQARIMGMNCQYFLKNGGHFLISIKACCIDSTNEPAVVFAAEVQKLKEEGLKPEQQLTLEPYERDHAMVLGSYRA.

The interval 1 to 62 is disordered; that stretch reads MGKDFKSGGG…GKFGAKGPRG (62 aa). The segment covering 20–56 has biased composition (gly residues); that stretch reads GPGGPGGRPFNKGPGGPGGPGGKFGGGRPGGPGGKFG. Residues Arg27, Arg47, and Arg61 each carry the asymmetric dimethylarginine modification. S-adenosyl-L-methionine contacts are provided by residues 151-152, 170-171, 195-196, and 215-218; these read TT, EF, DA, and DVAQ.

This sequence belongs to the methyltransferase superfamily. Fibrillarin family. Component of box C/D small nucleolar ribonucleoprotein (snoRNP) particles. It is associated with the U3, U8 and U13 small nuclear RNAs. In terms of processing, by homology to other fibrillarins, some or all of the N-terminal domain arginines are modified to asymmetric dimethylarginine (DMA).

The protein resides in the nucleus. Its subcellular location is the nucleolus. It catalyses the reaction L-glutaminyl-[histone H2A] + S-adenosyl-L-methionine = N(5)-methyl-L-glutaminyl-[histone H2A] + S-adenosyl-L-homocysteine + H(+). Functionally, S-adenosyl-L-methionine-dependent methyltransferase that has the ability to methylate both RNAs and proteins. Involved in pre-rRNA processing. Utilizes the methyl donor S-adenosyl-L-methionine to catalyze the site-specific 2'-hydroxyl methylation of ribose moieties in pre-ribosomal RNA. Site specificity is provided by a guide RNA that base pairs with the substrate. Methylation occurs at a characteristic distance from the sequence involved in base pairing with the guide RNA. Also acts as a protein methyltransferase by mediating methylation of 'Gln-105' of histone H2A (H2AQ105me), a modification that impairs binding of the FACT complex and is specifically present at 35S ribosomal DNA locus. The chain is rRNA 2'-O-methyltransferase fibrillarin (FIB) from Tetrahymena thermophila.